We begin with the raw amino-acid sequence, 285 residues long: Tumor necrosis factor ligand superfamily member 13B (285 aa).

Topologically, residues 1-46 (MDDSTEREQSRLTSCLKKREEMKLKECVSILPRKESPSVRSSKDGK) are cytoplasmic. Residues 47 to 67 (LLAATLLLALLSCCLTVVSFY) form a helical; Signal-anchor for type II membrane protein membrane-spanning segment. Topologically, residues 68–285 (QVAALQGDLA…VTFFGALKLL (218 aa)) are extracellular. The tract at residues 114–138 (IFEPPAPGEGNSSQNSRNKRAVQGP) is disordered. N-linked (GlcNAc...) asparagine glycosylation occurs at N124. A THD domain is found at 145 to 284 (DCLQLIADSE…DVTFFGALKL (140 aa)). A disulfide bridge links C232 with C245. The N-linked (GlcNAc...) (high mannose) asparagine glycan is linked to N242.

It belongs to the tumor necrosis factor family. Homotrimer. Isoform 2 heteromultimerizes with isoform 1, probably limiting the amount of functional isoform 1 on the cell surface. Isoform 3 is unlikely form trimers or bind to BAFF receptors. The soluble form derives from the membrane form by proteolytic processing. In terms of processing, isoform 2 is not efficiently shed from the membrane unlike isoform 1. Post-translationally, N-glycosylated. As to expression, abundantly expressed in peripheral blood Leukocytes and is specifically expressed in monocytes and macrophages. Also found in the spleen, lymph node, bone marrow, T-cells and dendritic cells. A lower expression seen in placenta, heart, lung, fetal liver, thymus, and pancreas. Isoform 2 is expressed in many myeloid cell lines.

It localises to the cell membrane. Its subcellular location is the secreted. Functionally, cytokine that binds to TNFRSF13B/TACI and TNFRSF17/BCMA. TNFSF13/APRIL binds to the same 2 receptors. Together, they form a 2 ligands -2 receptors pathway involved in the stimulation of B- and T-cell function and the regulation of humoral immunity. A third B-cell specific BAFF-receptor (BAFFR/BR3) promotes the survival of mature B-cells and the B-cell response. In terms of biological role, isoform 2 seems to inhibit isoform 1 secretion and bioactivity. Its function is as follows. Acts as a transcription factor for its own parent gene, in association with NF-kappa-B p50 subunit, at least in autoimmune and proliferative B-cell diseases. The presence of Delta4BAFF is essential for soluble BAFF release by IFNG/IFN-gamma-stimulated monocytes and for B-cell survival. It can directly or indirectly regulate the differential expression of a large number of genes involved in the innate immune response and the regulation of apoptosis. This Homo sapiens (Human) protein is Tumor necrosis factor ligand superfamily member 13B (TNFSF13B).